Consider the following 407-residue polypeptide: MELLEEDLTCPICCSLFDDPRVLPCSHNFCKKCLEGLLEGNVRNSLWRPSPFKCPTCRKETSATGVNSLQVNYSLKGIVEKYNKIKISPKMPVCKEHLGQPLNIFCVTDMQLICGVCATRGSHTKHVFSSIEDAYTQERDAFEFLFQSFETWRRGDALSRLDTLETNKRKSLQLLTKDSDKVKEFFEKLQHTLDQKKNEILSDFETMKLAVMQTYDPEINKLNSILQEQRMAFNIAEAFKDVSEPIIFLQQMQEFREKIKVIKETPLPPSNLPTSPLMKNFDTSQWEDIKLVDVDKLSLPQDTGVLTSRSPWHPCLLLMAVVLLGLLVFFGPTVFLEWSPLEELATWKDCLSSFNSYLTKSADFVEQSVFYWEQMTDGLFVFSERVKNVSLVALNNVAEFVCKYKLL.

The segment at 10–58 adopts an RING-type zinc-finger fold; it reads CPICCSLFDDPRVLPCSHNFCKKCLEGLLEGNVRNSLWRPSPFKCPTCR. Residues 89-131 form a B box-type zinc finger; that stretch reads PKMPVCKEHLGQPLNIFCVTDMQLICGVCATRGSHTKHVFSSI. Zn(2+) contacts are provided by cysteine 94, histidine 97, cysteine 117, and histidine 123. Residues 172-200 adopt a coiled-coil conformation; sequence LQLLTKDSDKVKEFFEKLQHTLDQKKNEI. The helical transmembrane segment at 316-336 threads the bilayer; that stretch reads LLLMAVVLLGLLVFFGPTVFL.

In terms of assembly, interacts (via C-terminal domain) with VCP. Interacts with AKT1; the interaction ubiquitinates AKT1 and leads to its proteasomal degradation. Interacts with MDM2; the interaction ubiquitinates AKT1 and leads to its proteasomal degradation. Interacts with p62/SQSTM1. Interacts with TRAF6. Interacts with IKBKG/NEMO. Auto-ubiquitinated; requires the RING-type zinc finger. Auto-polyubiquitination leads to proteasomal degradation.

It localises to the endoplasmic reticulum membrane. The enzyme catalyses S-ubiquitinyl-[E2 ubiquitin-conjugating enzyme]-L-cysteine + [acceptor protein]-L-lysine = [E2 ubiquitin-conjugating enzyme]-L-cysteine + N(6)-ubiquitinyl-[acceptor protein]-L-lysine.. The protein operates within protein modification; protein ubiquitination. Functionally, endoplasmic reticulum (ER) membrane anchored E3 ligase involved in the retrotranslocation and turnover of membrane and secretory proteins from the ER through a set of processes named ER-associated degradation (ERAD). This process acts on misfolded proteins as well as in the regulated degradation of correctly folded proteins. Enhances ionizing radiation-induced p53/TP53 stability and apoptosis via ubiquitinating MDM2 and AKT1 and decreasing AKT1 kinase activity through MDM2 and AKT1 proteasomal degradation. Regulates ER stress-induced autophagy, and may act as a tumor suppressor. Also plays a role in innate immune response by stimulating NF-kappa-B activity in the TLR2 signaling pathway. Ubiquitinates TRAF6 via the 'Lys-29'-linked polyubiquitination chain resulting in NF-kappa-B activation. Participates as well in T-cell receptor-mediated NF-kappa-B activation. In the presence of TNF, modulates the IKK complex by regulating IKBKG/NEMO ubiquitination leading to the repression of NF-kappa-B. The protein is E3 ubiquitin-protein ligase TRIM13 (Trim13) of Rattus norvegicus (Rat).